The following is a 291-amino-acid chain: Elongation factor Ts (291 aa).

Residues 79–82 (TDFV) form an involved in Mg(2+) ion dislocation from EF-Tu region.

Belongs to the EF-Ts family.

It is found in the cytoplasm. In terms of biological role, associates with the EF-Tu.GDP complex and induces the exchange of GDP to GTP. It remains bound to the aminoacyl-tRNA.EF-Tu.GTP complex up to the GTP hydrolysis stage on the ribosome. This is Elongation factor Ts from Ruegeria sp. (strain TM1040) (Silicibacter sp.).